The following is a 560-amino-acid chain: Calnexin homolog (560 aa).

The signal sequence occupies residues methionine 1–alanine 22. Residues aspartate 23–glycine 489 lie on the Lumenal side of the membrane. A disulfide bridge links cysteine 132 with cysteine 163. Residues tyrosine 136, lysine 138, tyrosine 154, and aspartate 161 each coordinate an alpha-D-glucoside. Residues isoleucine 242–aspartate 375 form a p domain (Extended arm) region. Repeat copies occupy residues aspartate 244–aspartate 255, aspartate 261–glutamate 272, aspartate 280–glutamate 291, aspartate 299–aspartate 310, and glycine 314–proline 324. 2 4 X approximate repeats regions span residues aspartate 244–aspartate 310 and glycine 314–proline 371. Positions tryptophan 253–aspartate 273 are disordered. Cysteine 326 and cysteine 332 are joined by a disulfide. 3 consecutive repeat copies span residues glycine 333–proline 343, glycine 347–proline 357, and glycine 361–proline 371. Glutamate 391 provides a ligand contact to an alpha-D-glucoside. An N-linked (GlcNAc...) asparagine glycan is attached at asparagine 418. A helical transmembrane segment spans residues isoleucine 490 to alanine 512. Topologically, residues serine 513–aspartate 560 are cytoplasmic. The segment at alanine 517–aspartate 560 is disordered. The span at glutamate 525–aspartate 544 shows a compositional bias: basic and acidic residues. Threonine 551 carries the phosphothreonine modification. Serine 553 is subject to Phosphoserine. Threonine 555 carries the post-translational modification Phosphothreonine.

This sequence belongs to the calreticulin family.

Its subcellular location is the endoplasmic reticulum membrane. Functionally, calcium-binding protein that interacts with newly synthesized monoglucosylated glycoproteins in the endoplasmic reticulum. It may act in assisting protein assembly and/or in the retention within the ER of unassembled protein subunits. It seems to play a major role in the quality control apparatus of the ER by the retention of incorrectly folded proteins. The chain is Calnexin homolog (cal1) from Schizosaccharomyces pombe (strain 972 / ATCC 24843) (Fission yeast).